A 99-amino-acid polypeptide reads, in one-letter code: Large ribosomal subunit protein eL21 (99 aa).

The protein belongs to the eukaryotic ribosomal protein eL21 family.

This chain is Large ribosomal subunit protein eL21, found in Ignicoccus hospitalis (strain KIN4/I / DSM 18386 / JCM 14125).